The primary structure comprises 302 residues: Glycine N-acyltransferase-like protein 1 (302 aa).

The protein belongs to the glycine N-acyltransferase family. As to expression, expressed in liver and kidney and, at lower levels, in pancreas, testis, ovary and stomach.

The catalysed reaction is an acyl-CoA + L-glutamine = an N(2)-acyl-L-glutamine + CoA + H(+). Its function is as follows. Acyltransferase which transfers an acyl group to the N-terminus of glutamine. Can use phenylacetyl-CoA as an acyl donor. The chain is Glycine N-acyltransferase-like protein 1 from Homo sapiens (Human).